The following is a 159-amino-acid chain: uncharacterized protein (159 aa).

The next 3 helical transmembrane spans lie at 17–37 (FFFFFFFFSLPLSSFKLNLSS), 44–64 (WLIVFLLDFGEIMFPAPPLPI), and 67–87 (FSGALLPLSLFLGFLDVDLIA).

The protein localises to the membrane. This is an uncharacterized protein from Saccharomyces cerevisiae (strain ATCC 204508 / S288c) (Baker's yeast).